Here is a 91-residue protein sequence, read N- to C-terminus: Acylphosphatase (91 aa).

The Acylphosphatase-like domain maps to 3-91 (CLRAIVKGKV…ANYSDFRIKH (89 aa)). Catalysis depends on residues Arg18 and Asn36.

It belongs to the acylphosphatase family.

The enzyme catalyses an acyl phosphate + H2O = a carboxylate + phosphate + H(+). In Dehalococcoides mccartyi (strain CBDB1), this protein is Acylphosphatase (acyP).